Consider the following 90-residue polypeptide: Probable small nuclear ribonucleoprotein E (90 aa).

The 76-residue stretch at 14 to 89 (VNLIFRYLQN…ITLIHAAQQE (76 aa)) folds into the Sm domain.

The protein belongs to the snRNP Sm proteins family. Core component of the spliceosomal U1, U2, U4 and U5 small nuclear ribonucleoproteins (snRNPs), the building blocks of the spliceosome.

Its subcellular location is the nucleus. It localises to the cytoplasm. The protein localises to the cytosol. In terms of biological role, plays a role in pre-mRNA splicing as a core component of the spliceosomal U1, U2, U4 and U5 small nuclear ribonucleoproteins (snRNPs), the building blocks of the spliceosome. This Caenorhabditis elegans protein is Probable small nuclear ribonucleoprotein E (snr-6).